A 345-amino-acid chain; its full sequence is UDP-N-acetylenolpyruvoylglucosamine reductase (345 aa).

One can recognise an FAD-binding PCMH-type domain in the interval 27–197 (FDASAELAYE…TKVVFKLPKQ (171 aa)). Arg-174 is an active-site residue. The active-site Proton donor is Ser-245. Residue Glu-341 is part of the active site.

Belongs to the MurB family. It depends on FAD as a cofactor.

The protein localises to the cytoplasm. It catalyses the reaction UDP-N-acetyl-alpha-D-muramate + NADP(+) = UDP-N-acetyl-3-O-(1-carboxyvinyl)-alpha-D-glucosamine + NADPH + H(+). It functions in the pathway cell wall biogenesis; peptidoglycan biosynthesis. Functionally, cell wall formation. The sequence is that of UDP-N-acetylenolpyruvoylglucosamine reductase from Polynucleobacter asymbioticus (strain DSM 18221 / CIP 109841 / QLW-P1DMWA-1) (Polynucleobacter necessarius subsp. asymbioticus).